The chain runs to 263 residues: Ribosomal RNA small subunit methyltransferase A (263 aa).

S-adenosyl-L-methionine is bound by residues Asn20, Leu22, Gly47, Glu68, Asp90, and Asn111.

Belongs to the class I-like SAM-binding methyltransferase superfamily. rRNA adenine N(6)-methyltransferase family. RsmA subfamily.

The protein resides in the cytoplasm. The catalysed reaction is adenosine(1518)/adenosine(1519) in 16S rRNA + 4 S-adenosyl-L-methionine = N(6)-dimethyladenosine(1518)/N(6)-dimethyladenosine(1519) in 16S rRNA + 4 S-adenosyl-L-homocysteine + 4 H(+). Its function is as follows. Specifically dimethylates two adjacent adenosines (A1518 and A1519) in the loop of a conserved hairpin near the 3'-end of 16S rRNA in the 30S particle. May play a critical role in biogenesis of 30S subunits. This chain is Ribosomal RNA small subunit methyltransferase A, found in Chlorobium chlorochromatii (strain CaD3).